A 284-amino-acid chain; its full sequence is Bifunctional protein FolD 2 (284 aa).

Residues 166–168 (GAS) and Ile232 contribute to the NADP(+) site.

It belongs to the tetrahydrofolate dehydrogenase/cyclohydrolase family. In terms of assembly, homodimer.

The enzyme catalyses (6R)-5,10-methylene-5,6,7,8-tetrahydrofolate + NADP(+) = (6R)-5,10-methenyltetrahydrofolate + NADPH. It catalyses the reaction (6R)-5,10-methenyltetrahydrofolate + H2O = (6R)-10-formyltetrahydrofolate + H(+). It functions in the pathway one-carbon metabolism; tetrahydrofolate interconversion. Functionally, catalyzes the oxidation of 5,10-methylenetetrahydrofolate to 5,10-methenyltetrahydrofolate and then the hydrolysis of 5,10-methenyltetrahydrofolate to 10-formyltetrahydrofolate. The protein is Bifunctional protein FolD 2 of Colwellia psychrerythraea (strain 34H / ATCC BAA-681) (Vibrio psychroerythus).